Here is a 476-residue protein sequence, read N- to C-terminus: tRNA(Ile)-lysidine synthase (476 aa).

30 to 35 (SGGPDS) contacts ATP.

This sequence belongs to the tRNA(Ile)-lysidine synthase family.

Its subcellular location is the cytoplasm. It catalyses the reaction cytidine(34) in tRNA(Ile2) + L-lysine + ATP = lysidine(34) in tRNA(Ile2) + AMP + diphosphate + H(+). Its function is as follows. Ligates lysine onto the cytidine present at position 34 of the AUA codon-specific tRNA(Ile) that contains the anticodon CAU, in an ATP-dependent manner. Cytidine is converted to lysidine, thus changing the amino acid specificity of the tRNA from methionine to isoleucine. This is tRNA(Ile)-lysidine synthase from Bacillus cereus (strain ZK / E33L).